Consider the following 391-residue polypeptide: Elongation factor Tu (391 aa).

A tr-type G domain is found at 10–201 (KPHVNIGTIG…AVDEYIPTPA (192 aa)). A G1 region spans residues 19 to 26 (GHVDHGKT). 19 to 26 (GHVDHGKT) is a GTP binding site. Threonine 26 is a Mg(2+) binding site. Residues 55 to 59 (GITIS) form a G2 region. The interval 76 to 79 (DCPG) is G3. GTP-binding positions include 76–80 (DCPGH) and 131–134 (NKVD). Residues 131–134 (NKVD) form a G4 region. The tract at residues 169–171 (SAL) is G5.

The protein belongs to the TRAFAC class translation factor GTPase superfamily. Classic translation factor GTPase family. EF-Tu/EF-1A subfamily. In terms of assembly, monomer.

The protein localises to the cytoplasm. The catalysed reaction is GTP + H2O = GDP + phosphate + H(+). Its function is as follows. GTP hydrolase that promotes the GTP-dependent binding of aminoacyl-tRNA to the A-site of ribosomes during protein biosynthesis. In Cereibacter sphaeroides (strain ATCC 17029 / ATH 2.4.9) (Rhodobacter sphaeroides), this protein is Elongation factor Tu.